The primary structure comprises 360 residues: Coiled-coil domain-containing protein 86 (360 aa).

Basic residues predominate over residues 1 to 12; it reads MDTPLRRSRRLG. 2 disordered regions span residues 1 to 314 and 328 to 360; these read MDTP…ENER and LKRA…AAKI. Phosphoserine is present on residues Ser-21, Ser-24, Ser-47, Ser-50, and Ser-58. Thr-65 bears the Phosphothreonine mark. Phosphoserine occurs at positions 66, 69, 80, 91, 102, 110, 113, and 128. A compositionally biased stretch (polar residues) spans 66–83; that stretch reads SPGSPRLQQGSGLESPQG. Residues 153–164 show a composition bias toward pro residues; sequence QLPPVPGSPEPY. 3 positions are modified to phosphoserine: Ser-188, Ser-217, and Ser-218. The segment covering 238–254 has biased composition (basic residues); that stretch reads GKPKSGRVWKDRSKKRF. A coiled-coil region spans residues 272-323; it reads KERQERKLAKDFARHLEEEKERRRQEKKQRRAENLKRRLENERKAEVVQVIR. Basic and acidic residues-rich tracts occupy residues 273–295 and 302–314; these read ERQE…ERRR and RAEN…ENER. Arg-342 is modified (citrulline).

In terms of processing, citrullinated by PADI4.

The protein resides in the nucleus. The protein localises to the chromosome. It localises to the nucleolus. Functionally, required for proper chromosome segregation during mitosis and error-free mitotic progression. The protein is Coiled-coil domain-containing protein 86 of Pongo abelii (Sumatran orangutan).